Reading from the N-terminus, the 335-residue chain is Probable cytosolic iron-sulfur protein assembly protein Ciao1 (335 aa).

WD repeat units lie at residues 12–51, 57–96, 101–140, 146–185, 192–231, 250–289, and 301–335; these read GHKG…WSTK, GHKR…FECN, GHEN…EFEC, SHTQ…NDWD, SHTS…NSAG, QHSR…KPDE, and AHDQ…KVTE.

This sequence belongs to the WD repeat CIA1 family.

Functionally, essential component of the cytosolic iron-sulfur (Fe/S) protein assembly machinery. Required for the maturation of extramitochondrial Fe/S proteins. The protein is Probable cytosolic iron-sulfur protein assembly protein Ciao1 of Drosophila erecta (Fruit fly).